We begin with the raw amino-acid sequence, 324 residues long: Probable nicotianamine synthase 4 (324 aa).

It belongs to the nicotianamine synthase (NAS)-like family.

The enzyme catalyses 3 S-adenosyl-L-methionine = nicotianamine + 3 S-methyl-5'-thioadenosine + 3 H(+). Synthesizes nicotianamine, a polyamine which serves as a sensor for the physiological iron status within the plant, and/or might be involved in the transport of iron. The polypeptide is Probable nicotianamine synthase 4 (NAS4) (Arabidopsis thaliana (Mouse-ear cress)).